The following is a 260-amino-acid chain: Small ribosomal subunit protein uS3 (260 aa).

A KH type-2 domain is found at 39–114; it reads LRQYIEQKLG…QIRINVVEVQ (76 aa). The interval 219-260 is disordered; the sequence is EVAAPPPSTRDRDRDRGDRDREPRRRQQQRRRQQFEDRSNEG. 2 stretches are compositionally biased toward basic and acidic residues: residues 227–243 and 251–260; these read TRDRDRDRGDRDREPRR and QQFEDRSNEG.

It belongs to the universal ribosomal protein uS3 family. In terms of assembly, part of the 30S ribosomal subunit. Forms a tight complex with proteins S10 and S14.

In terms of biological role, binds the lower part of the 30S subunit head. Binds mRNA in the 70S ribosome, positioning it for translation. In Trichormus variabilis (strain ATCC 29413 / PCC 7937) (Anabaena variabilis), this protein is Small ribosomal subunit protein uS3.